Consider the following 183-residue polypeptide: Adenine phosphoribosyltransferase (183 aa).

Belongs to the purine/pyrimidine phosphoribosyltransferase family. Homodimer.

It localises to the cytoplasm. The enzyme catalyses AMP + diphosphate = 5-phospho-alpha-D-ribose 1-diphosphate + adenine. Its pathway is purine metabolism; AMP biosynthesis via salvage pathway; AMP from adenine: step 1/1. Its function is as follows. Catalyzes a salvage reaction resulting in the formation of AMP, that is energically less costly than de novo synthesis. This is Adenine phosphoribosyltransferase from Shewanella piezotolerans (strain WP3 / JCM 13877).